A 904-amino-acid chain; its full sequence is Disintegrin and metalloproteinase domain-containing protein 22 (904 aa).

The signal sequence occupies residues 1-23; that stretch reads MQAAAAASFWLLCVLGTCPLARC. Residues 24 to 223 constitute a propeptide that is removed on maturation; the sequence is GRAGVASLKG…LKPRLKRRKR (200 aa). The Extracellular segment spans residues 24–734; the sequence is GRAGVASLKG…LSGNGVAGTN (711 aa). The N-linked (GlcNAc...) asparagine glycan is linked to Asn-163. The Peptidase M12B domain occupies 237 to 436; sequence KYIELMIVND…GGGACLFNKP (200 aa). 17 disulfide bridges follow: Cys-347-Cys-431, Cys-390-Cys-415, Cys-392-Cys-399, Cys-445-Cys-475, Cys-456-Cys-472, Cys-458-Cys-464, Cys-471-Cys-492, Cys-483-Cys-489, Cys-488-Cys-514, Cys-501-Cys-521, Cys-508-Cys-540, Cys-533-Cys-545, Cys-552-Cys-603, Cys-567-Cys-633, Cys-581-Cys-591, Cys-598-Cys-661, and Cys-655-Cys-666. The region spanning 442–529 is the Disintegrin domain; the sequence is PPECGNGFIE…QCAPNVHKMD (88 aa). Asn-517 carries N-linked (GlcNAc...) asparagine glycosylation. Residue Asn-632 is glycosylated (N-linked (GlcNAc...) asparagine). The N-linked (GlcNAc...) asparagine glycan is linked to Asn-673. The 38-residue stretch at 673–710 folds into the EGF-like domain; sequence NFSTCSSSKAGTVCSGNGVCSNELKCVCNRHWTGADCG. 3 cysteine pairs are disulfide-bonded: Cys-677–Cys-692, Cys-686–Cys-698, and Cys-700–Cys-709. Residues 735–755 traverse the membrane as a helical segment; the sequence is IIIGIIAGTILVLALILGITA. Residues 756–857 are Cytoplasmic-facing; it reads WGYKNYREQR…RFRPRSNSTE (102 aa). Residues 769–904 form a disordered region; the sequence is QGDYVKKPGD…QSARLWETSI (136 aa). A compositionally biased stretch (low complexity) spans 789–808; sequence GGSTNSASSSKKRSNGLSHS. A phosphoserine mark is found at Ser-808, Lys-817, and Ser-832. The span at 809–827 shows a compositional bias: basic and acidic residues; that stretch reads WSERIPDTKHISDICENGR. Residues 840-851 are compositionally biased toward basic residues; it reads NKKKIRGKRFRP. A phosphoserine mark is found at Ser-855, Ser-860, Ser-864, Ser-868, and Met-882. The span at 860–875 shows a compositional bias: low complexity; sequence SPAKSPSSSTGSIASS.

As to quaternary structure, interacts with LGI1. Can bind to LGI4. Interacts with KCNA2, DLG2 and DLG4. Interacts with ADAM11. Interacts (via C-terminus) with YWHAB/14-3-3 beta. Interacts (via C-terminus) with YWHAZ/14-3-3 zeta. In terms of processing, the precursor is cleaved by a furin endopeptidase. As to expression, detected in juxtaparanodal zones in the central nervous system and at nerve terminal plexuses of basket cells in the cerebellum (at protein level). Expressed at high levels in the brain. Strongly expressed in cerebellar granule cells and hippocampus. In spinal cord, expression is restricted to gray matter.

It is found in the cell membrane. Its subcellular location is the cell projection. It localises to the axon. Functionally, probable ligand for integrin in the brain. This is a non catalytic metalloprotease-like protein. Involved in regulation of cell adhesion and spreading and in inhibition of cell proliferation. Neuronal receptor for LGI1. This chain is Disintegrin and metalloproteinase domain-containing protein 22 (Adam22), found in Mus musculus (Mouse).